Reading from the N-terminus, the 429-residue chain is Threonine synthase (429 aa).

Position 108 is an N6-(pyridoxal phosphate)lysine (lysine 108).

The protein belongs to the threonine synthase family. Pyridoxal 5'-phosphate serves as cofactor.

The enzyme catalyses O-phospho-L-homoserine + H2O = L-threonine + phosphate. The protein operates within amino-acid biosynthesis; L-threonine biosynthesis; L-threonine from L-aspartate: step 5/5. Its function is as follows. Catalyzes the gamma-elimination of phosphate from L-phosphohomoserine and the beta-addition of water to produce L-threonine. The chain is Threonine synthase (thrC) from Buchnera aphidicola subsp. Schizaphis graminum (strain Sg).